The following is a 95-amino-acid chain: Aspartyl/glutamyl-tRNA(Asn/Gln) amidotransferase subunit C (95 aa).

This sequence belongs to the GatC family. As to quaternary structure, heterotrimer of A, B and C subunits.

The enzyme catalyses L-glutamyl-tRNA(Gln) + L-glutamine + ATP + H2O = L-glutaminyl-tRNA(Gln) + L-glutamate + ADP + phosphate + H(+). It carries out the reaction L-aspartyl-tRNA(Asn) + L-glutamine + ATP + H2O = L-asparaginyl-tRNA(Asn) + L-glutamate + ADP + phosphate + 2 H(+). Functionally, allows the formation of correctly charged Asn-tRNA(Asn) or Gln-tRNA(Gln) through the transamidation of misacylated Asp-tRNA(Asn) or Glu-tRNA(Gln) in organisms which lack either or both of asparaginyl-tRNA or glutaminyl-tRNA synthetases. The reaction takes place in the presence of glutamine and ATP through an activated phospho-Asp-tRNA(Asn) or phospho-Glu-tRNA(Gln). The protein is Aspartyl/glutamyl-tRNA(Asn/Gln) amidotransferase subunit C of Pelobacter propionicus (strain DSM 2379 / NBRC 103807 / OttBd1).